The chain runs to 308 residues: Glycine--tRNA ligase alpha subunit (308 aa).

Belongs to the class-II aminoacyl-tRNA synthetase family. In terms of assembly, tetramer of two alpha and two beta subunits.

The protein resides in the cytoplasm. The enzyme catalyses tRNA(Gly) + glycine + ATP = glycyl-tRNA(Gly) + AMP + diphosphate. The polypeptide is Glycine--tRNA ligase alpha subunit (Brucella canis (strain ATCC 23365 / NCTC 10854 / RM-666)).